Here is a 575-residue protein sequence, read N- to C-terminus: Intermediate filament protein ifa-1 (575 aa).

Disordered regions lie at residues 1–30 (MMEI…TGNV) and 45–72 (SGAG…EKKE). The head stretch occupies residues 1–72 (MMEITRETMS…RDSREREKKE (72 aa)). The segment covering 7-17 (ETMSFTSTTPS) has biased composition (polar residues). Residues 63 to 72 (RDSREREKKE) are compositionally biased toward basic and acidic residues. The region spanning 69–422 (EKKEMSDLND…KMLEGEENRA (354 aa)) is the IF rod domain. The coil 1A stretch occupies residues 73–104 (MSDLNDRLASYIEKVRFLEAQNRKLAADLDAL). The segment at 105–118 (RSKWGKDTHNIRNM) is linker 1. Residues 119–256 (YEGELVDAQK…RVHDNEIKEL (138 aa)) are coil 1B. The segment at 257–274 (QTLASRDTTPENREFFKN) is linker 12. Residues 275-422 (ELSSAIRDIR…KMLEGEENRA (148 aa)) are coil 2. The tract at residues 423-572 (GLKQLVEQVV…EERATHIQRQ (150 aa)) is tail. One can recognise an LTD domain in the interval 455 to 572 (SRQSFQRSAK…EERATHIQRQ (118 aa)).

It belongs to the intermediate filament family. Forms some heteromeric filaments with ifb-1. Isoform d is abundantly expressed in the marginal cells of the pharynx, forming apicobasally oriented thick filament bundles that are attached to the apical and basal plasma membrane by hemi-adherens junctions. Expression of isoform c is also seen in the excretory cells and in the uterus. Isoform c is detectable in the amphid sensory neurins and the pharyngeal-intestinal valve. Both isoform c and isoform d are expressed in the rectum and vulva and in some neurons of the tail. In larvae, expression is seen in the excretory cell, the vulva, the rectum and in the thick filament bundles of the pharynx. Expression in pharynx begins in late embryos.

The protein localises to the cytoplasm. Cytoplasmic intermediate filaments make up the structural component of the cytoskeleton providing mechanical strength to cells. Essential protein required during embryogenesis especially for survival past the L1 larva stage, involved in intestine morphogenesis. This chain is Intermediate filament protein ifa-1 (ifa-1), found in Caenorhabditis elegans.